A 77-amino-acid chain; its full sequence is Conotoxin ArMKLT2-0251 (77 aa).

The first 22 residues, 1–22 (MKLTCVLIVAVLILTACQLIAA), serve as a signal peptide directing secretion. The propeptide occupies 23–46 (DDSRDLKRFSRRKMRDGMLNTKNM). At Gln-49 the chain carries Pyrrolidone carboxylic acid. Cystine bridges form between Cys-50-Cys-65, Cys-57-Cys-68, and Cys-64-Cys-73.

Belongs to the conotoxin O1 superfamily. Expressed by the venom duct.

It localises to the secreted. The polypeptide is Conotoxin ArMKLT2-0251 (Conus arenatus (Sand-dusted cone)).